Consider the following 373-residue polypeptide: Putative glutamate--cysteine ligase 2-1 (373 aa).

The protein belongs to the glutamate--cysteine ligase type 2 family. YbdK subfamily.

The enzyme catalyses L-cysteine + L-glutamate + ATP = gamma-L-glutamyl-L-cysteine + ADP + phosphate + H(+). In terms of biological role, ATP-dependent carboxylate-amine ligase which exhibits weak glutamate--cysteine ligase activity. The chain is Putative glutamate--cysteine ligase 2-1 from Legionella pneumophila (strain Paris).